A 179-amino-acid polypeptide reads, in one-letter code: Large ribosomal subunit protein uL6 (179 aa).

The protein belongs to the universal ribosomal protein uL6 family. As to quaternary structure, part of the 50S ribosomal subunit.

This protein binds to the 23S rRNA, and is important in its secondary structure. It is located near the subunit interface in the base of the L7/L12 stalk, and near the tRNA binding site of the peptidyltransferase center. The sequence is that of Large ribosomal subunit protein uL6 from Mycobacteroides abscessus (strain ATCC 19977 / DSM 44196 / CCUG 20993 / CIP 104536 / JCM 13569 / NCTC 13031 / TMC 1543 / L948) (Mycobacterium abscessus).